We begin with the raw amino-acid sequence, 158 residues long: NAD(P)H-quinone oxidoreductase subunit N (158 aa).

The protein belongs to the complex I NdhN subunit family. In terms of assembly, NDH-1 can be composed of about 15 different subunits; different subcomplexes with different compositions have been identified which probably have different functions.

Its subcellular location is the cellular thylakoid membrane. The enzyme catalyses a plastoquinone + NADH + (n+1) H(+)(in) = a plastoquinol + NAD(+) + n H(+)(out). It carries out the reaction a plastoquinone + NADPH + (n+1) H(+)(in) = a plastoquinol + NADP(+) + n H(+)(out). NDH-1 shuttles electrons from an unknown electron donor, via FMN and iron-sulfur (Fe-S) centers, to quinones in the respiratory and/or the photosynthetic chain. The immediate electron acceptor for the enzyme in this species is believed to be plastoquinone. Couples the redox reaction to proton translocation, and thus conserves the redox energy in a proton gradient. Cyanobacterial NDH-1 also plays a role in inorganic carbon-concentration. The chain is NAD(P)H-quinone oxidoreductase subunit N from Crocosphaera subtropica (strain ATCC 51142 / BH68) (Cyanothece sp. (strain ATCC 51142)).